A 397-amino-acid chain; its full sequence is Methyltransferase/ribosomally synthesized type I borosin cyclic peptide precursor mroMa1 (397 aa).

The tract at residues 1–246 (MALKKPGSLT…TTSTFYVPPR (246 aa)) is methyltransferase domain. Residues Arg70, Tyr74, and Tyr96 contribute to the active site. S-adenosyl-L-methionine is bound by residues Tyr96, His98, Val101, Ala128, Gln170, Gly208, Ser239, and Thr240. The clasp domain stretch occupies residues 247 to 365 (TPAPIDPKAV…GPIFVVMRQL (119 aa)). The tract at residues 366-388 (PSAIASGQEPSQEEIARADDATA) is precursor leader. N-methylisoleucine occurs at positions 391 and 392. The residue at position 393 (Tyr393) is an N-methyltyrosine. Residue Ile394 is modified to N-methylisoleucine. N-methylvaline is present on Val395.

It in the N-terminal section; belongs to the precorrin methyltransferase family. As to quaternary structure, homodimer. Post-translationally, mroMA automethylates at Ile-391, Ile-392, Tyr-393, Ile-394 and Val-395 before being processed by the a prolyloligopeptidase which likely forms a peptidyl ester upon removal of the follower propeptide, which then undergoes macrocyclization with the N-terminus of the modified core peptide. Peptide backbone alpha-N-methylations change the physicochemical properties of amide bonds to provide structural constraints and other favorable characteristics including biological membrane permeability to peptides.

Its pathway is secondary metabolite biosynthesis. Fusion protein of the methyltransferase mroM1 and a type I borosin core peptide; part of the gene cluster that mediates the biosynthesis of a type I borosin, a highly methylated cyclic peptide with potent biological activities. Type I borosins derive from the C-terminus of the fusion protein, and it is the same protein that methylates its own C-terminus using S-adenosyl methionine (SAM). The C-terminus is subsequently cleaved off and macrocyclized by a prolyloligopeptidase to give the final product. This Mycena rosella (Pink bonnet) protein is Methyltransferase/ribosomally synthesized type I borosin cyclic peptide precursor mroMa1.